We begin with the raw amino-acid sequence, 296 residues long: tRNA dimethylallyltransferase (296 aa).

Residue 10–17 participates in ATP binding; the sequence is GPTASGKT. Substrate is bound at residue 12-17; that stretch reads TASGKT. The segment at 35–38 is interaction with substrate tRNA; that stretch reads DSRQ.

This sequence belongs to the IPP transferase family. As to quaternary structure, monomer. Requires Mg(2+) as cofactor.

It catalyses the reaction adenosine(37) in tRNA + dimethylallyl diphosphate = N(6)-dimethylallyladenosine(37) in tRNA + diphosphate. Catalyzes the transfer of a dimethylallyl group onto the adenine at position 37 in tRNAs that read codons beginning with uridine, leading to the formation of N6-(dimethylallyl)adenosine (i(6)A). This chain is tRNA dimethylallyltransferase, found in Synechococcus sp. (strain RCC307).